The primary structure comprises 149 residues: MMLRTWISLPMVLLDAYCFCIFVSCSISTTTAPVEWKSPDRQIPMNITCANYSGTVNGNVTFRGLQNKTEDFLHWLLGWGHKSICSFFPKLQGNKEQHYMYGITNLTYNCTYDRLTLLNLTTENSGKYYFKREDVNSTFYYSCYNLTVT.

Residues 1–18 (MMLRTWISLPMVLLDAYC) form the signal peptide. N-linked (GlcNAc...) asparagine; by host glycosylation is found at asparagine 46, asparagine 51, asparagine 59, asparagine 67, asparagine 105, asparagine 109, asparagine 119, asparagine 136, and asparagine 145.

Belongs to the RL11 family. In terms of processing, N-glycosylated and possibly O-glycosylated.

The protein resides in the virion membrane. The polypeptide is Envelope glycoprotein UL4 (UL4) (Human cytomegalovirus (strain Merlin) (HHV-5)).